Consider the following 206-residue polypeptide: FMN-dependent NADH:quinone oxidoreductase 1 (206 aa).

Residues S9, 15 to 17, and 139 to 142 contribute to the FMN site; these read SVS and SRGG.

It belongs to the azoreductase type 1 family. In terms of assembly, homodimer. The cofactor is FMN.

It catalyses the reaction 2 a quinone + NADH + H(+) = 2 a 1,4-benzosemiquinone + NAD(+). The catalysed reaction is N,N-dimethyl-1,4-phenylenediamine + anthranilate + 2 NAD(+) = 2-(4-dimethylaminophenyl)diazenylbenzoate + 2 NADH + 2 H(+). Quinone reductase that provides resistance to thiol-specific stress caused by electrophilic quinones. Its function is as follows. Also exhibits azoreductase activity. Catalyzes the reductive cleavage of the azo bond in aromatic azo compounds to the corresponding amines. The polypeptide is FMN-dependent NADH:quinone oxidoreductase 1 (Cupriavidus pinatubonensis (strain JMP 134 / LMG 1197) (Cupriavidus necator (strain JMP 134))).